The following is a 759-amino-acid chain: Cullin-4A (759 aa).

A Glycyl lysine isopeptide (Lys-Gly) (interchain with G-Cter in SUMO2) cross-link involves residue K8. S10 is modified (phosphoserine). A Glycyl lysine isopeptide (Lys-Gly) (interchain with G-Cter in ubiquitin) cross-link involves residue K33. One can recognise a Cullin neddylation domain in the interval 691 to 751; sequence DRQYQIDAAI…RDYMERDKDN (61 aa). K705 is covalently cross-linked (Glycyl lysine isopeptide (Lys-Gly) (interchain with G-Cter in NEDD8)).

This sequence belongs to the cullin family. In terms of assembly, can self-associate. Component of multiple DCX (DDB1-CUL4-X-box) E3 ubiquitin-protein ligase complexes that seem to consist of DDB1, CUL4A or CUL4B, RBX1 and a variable substrate recognition component which seems to belong to a protein family described as DCAF (Ddb1- and Cul4-associated factor) or CDW (CUL4-DDB1-associated WD40-repeat) proteins. Component of the CSA complex (DCX(ERCC8) complex) containing ERCC8, RBX1, DDB1 and CUL4A; the CSA complex interacts with RNA polymerase II; upon UV irradiation it interacts with the COP9 signalosome and preferentially with the hyperphosphorylated form of RNA polymerase II. Component of the DCX(DET1-COP1) complex with the substrate recognition component DET1 and COP1. Component of the DCX(DDB2) complex with the substrate recognition component DDB2. Component of the DCX(DTL) complex with the putative substrate recognition component DTL. Component of DCX complexes part of the DesCEND (destruction via C-end degrons) pathway, which contain either TRPC4AP or DCAF12 as substrate-recognition component. Component of the DCX(AMBRA1) complex with the substrate recognition component AMBRA1. Interacts with DDB1, RBX1, RNF7, CDT1, TIP120A/CAND1, SKP2, CDKN1B, MDM2, TP53 and HOXA9. Interacts with DDB2; the interactions with DDB2 and CAND1 are mutually exclusive. Interacts with DCAF1, DTL, DDA1, DCAF6, DCAF4, DCAF16, DCAF17, DET1, WDTC1, DCAF5, DCAF11, WDR24A, COP1, PAFAH1B1, ERCC8, GRWD1, FBXW5, RBBP7, GNB2, WSB1, WSB2, NUP43, PWP1, FBXW8, ATG16L1, KATNB1, RBBP4, RBBP5, LRWD1 and DCAF8. May interact with WDR26, WDR51B, SNRNP40, WDR61, WDR76, WDR5. Interacts (when neddylated) with ARIH1; leading to activate the E3 ligase activity of ARIH1. The DDB1-CUL4A complex interacts with CRY1. Interacts (unneddylated form) with DCUN1D1, DCUN1D2, DCUN1D3, DCUN1D4 and DCUN1D5; these interactions promote the cullin neddylation. (Microbial infection) Interacts with Epstein-Barr virus BPLF1. In terms of processing, neddylated; required for activity of cullin-RING-based E3 ubiquitin-protein ligase complexes. Deneddylated via its interaction with the COP9 signalosome (CSN) complex. (Microbial infection) Deneddylated by Epstein-Barr virus BPLF1 leading to a S-phase-like environment that is required for efficient replication of the viral genome.

It participates in protein modification; protein ubiquitination. Its function is as follows. Core component of multiple cullin-RING-based E3 ubiquitin-protein ligase complexes which mediate the ubiquitination of target proteins. As a scaffold protein may contribute to catalysis through positioning of the substrate and the ubiquitin-conjugating enzyme. The E3 ubiquitin-protein ligase activity of the complex is dependent on the neddylation of the cullin subunit and is inhibited by the association of the deneddylated cullin subunit with TIP120A/CAND1. The functional specificity of the E3 ubiquitin-protein ligase complex depends on the variable substrate recognition component. DCX(DET1-COP1) directs ubiquitination of JUN. DCX(DDB2) directs ubiquitination of XPC. DCX(DDB2) ubiquitinates histones H3-H4 and is required for efficient histone deposition during replication-coupled (H3.1) and replication-independent (H3.3) nucleosome assembly, probably by facilitating the transfer of H3 from ASF1A/ASF1B to other chaperones involved in histone deposition. DCX(DTL) plays a role in PCNA-dependent polyubiquitination of CDT1 and MDM2-dependent ubiquitination of p53/TP53 in response to radiation-induced DNA damage and during DNA replication. DCX(DTL) directs autoubiquitination of DTL. In association with DDB1 and SKP2 probably is involved in ubiquitination of CDKN1B/p27kip. Is involved in ubiquitination of HOXA9. The DDB1-CUL4A-DTL E3 ligase complex regulates the circadian clock function by mediating the ubiquitination and degradation of CRY1. The DCX(ERCC8) complex (also named CSA complex) plays a role in transcription-coupled repair (TCR). A number of DCX complexes (containing either TRPC4AP or DCAF12 as substrate-recognition component) are part of the DesCEND (destruction via C-end degrons) pathway, which recognizes a C-degron located at the extreme C terminus of target proteins, leading to their ubiquitination and degradation. The DCX(AMBRA1) complex is a master regulator of the transition from G1 to S cell phase by mediating ubiquitination of phosphorylated cyclin-D (CCND1, CCND2 and CCND3). The DCX(AMBRA1) complex also acts as a regulator of Cul5-RING (CRL5) E3 ubiquitin-protein ligase complexes by mediating ubiquitination and degradation of Elongin-C (ELOC) component of CRL5 complexes. With CUL4B, contributes to ribosome biogenesis. In Homo sapiens (Human), this protein is Cullin-4A.